A 158-amino-acid chain; its full sequence is 6,7-dimethyl-8-ribityllumazine synthase (158 aa).

Residues Phe23, 61 to 63 (SFE), and 85 to 87 (AVI) contribute to the 5-amino-6-(D-ribitylamino)uracil site. 90–91 (DT) is a (2S)-2-hydroxy-3-oxobutyl phosphate binding site. His93 serves as the catalytic Proton donor. 5-amino-6-(D-ribitylamino)uracil is bound at residue Phe118. A (2S)-2-hydroxy-3-oxobutyl phosphate-binding site is contributed by Arg132.

Belongs to the DMRL synthase family.

It catalyses the reaction (2S)-2-hydroxy-3-oxobutyl phosphate + 5-amino-6-(D-ribitylamino)uracil = 6,7-dimethyl-8-(1-D-ribityl)lumazine + phosphate + 2 H2O + H(+). It functions in the pathway cofactor biosynthesis; riboflavin biosynthesis; riboflavin from 2-hydroxy-3-oxobutyl phosphate and 5-amino-6-(D-ribitylamino)uracil: step 1/2. Its function is as follows. Catalyzes the formation of 6,7-dimethyl-8-ribityllumazine by condensation of 5-amino-6-(D-ribitylamino)uracil with 3,4-dihydroxy-2-butanone 4-phosphate. This is the penultimate step in the biosynthesis of riboflavin. The sequence is that of 6,7-dimethyl-8-ribityllumazine synthase from Prochlorococcus marinus (strain NATL2A).